A 681-amino-acid polypeptide reads, in one-letter code: Transmembrane protein 214-A (681 aa).

2 disordered regions span residues methionine 1–proline 41 and lysine 58–glutamine 99. N-linked (GlcNAc...) asparagine glycans are attached at residues asparagine 300 and asparagine 324. 2 helical membrane-spanning segments follow: residues glycine 471–tyrosine 491 and leucine 608–valine 628.

This sequence belongs to the TMEM214 family. In terms of assembly, constitutively interacts with CASP4; required for the localization of procaspase 4 to the ER.

Its subcellular location is the endoplasmic reticulum membrane. Its function is as follows. Critical mediator, in cooperation with CASP4, of endoplasmic reticulum-stress induced apoptosis. Required or the activation of CASP4 following endoplasmic reticulum stress. The chain is Transmembrane protein 214-A (tmem214-a) from Xenopus laevis (African clawed frog).